The following is a 341-amino-acid chain: Anthranilate phosphoribosyltransferase (341 aa).

Residues Gly79, 82-83 (GD), Thr87, 89-92 (NIST), 107-115 (KHGNRAVSS), and Ser119 each bind 5-phospho-alpha-D-ribose 1-diphosphate. Residue Gly79 participates in anthranilate binding. Ser91 is a binding site for Mg(2+). Anthranilate is bound at residue Asn110. Anthranilate is bound at residue Arg165. The Mg(2+) site is built by Asp224 and Glu225.

The protein belongs to the anthranilate phosphoribosyltransferase family. In terms of assembly, homodimer. Mg(2+) is required as a cofactor.

It carries out the reaction N-(5-phospho-beta-D-ribosyl)anthranilate + diphosphate = 5-phospho-alpha-D-ribose 1-diphosphate + anthranilate. It participates in amino-acid biosynthesis; L-tryptophan biosynthesis; L-tryptophan from chorismate: step 2/5. Its function is as follows. Catalyzes the transfer of the phosphoribosyl group of 5-phosphorylribose-1-pyrophosphate (PRPP) to anthranilate to yield N-(5'-phosphoribosyl)-anthranilate (PRA). In Bacillus cereus (strain ATCC 14579 / DSM 31 / CCUG 7414 / JCM 2152 / NBRC 15305 / NCIMB 9373 / NCTC 2599 / NRRL B-3711), this protein is Anthranilate phosphoribosyltransferase.